Here is a 311-residue protein sequence, read N- to C-terminus: Methionyl-tRNA formyltransferase (311 aa).

117-120 (SLLP) contributes to the (6S)-5,6,7,8-tetrahydrofolate binding site.

Belongs to the Fmt family.

The enzyme catalyses L-methionyl-tRNA(fMet) + (6R)-10-formyltetrahydrofolate = N-formyl-L-methionyl-tRNA(fMet) + (6S)-5,6,7,8-tetrahydrofolate + H(+). Its function is as follows. Attaches a formyl group to the free amino group of methionyl-tRNA(fMet). The formyl group appears to play a dual role in the initiator identity of N-formylmethionyl-tRNA by promoting its recognition by IF2 and preventing the misappropriation of this tRNA by the elongation apparatus. In Bordetella avium (strain 197N), this protein is Methionyl-tRNA formyltransferase.